We begin with the raw amino-acid sequence, 224 residues long: Cytidylate kinase (224 aa).

12 to 20 (GPAGAGKST) provides a ligand contact to ATP.

It belongs to the cytidylate kinase family. Type 1 subfamily.

It is found in the cytoplasm. It catalyses the reaction CMP + ATP = CDP + ADP. The catalysed reaction is dCMP + ATP = dCDP + ADP. In Caldanaerobacter subterraneus subsp. tengcongensis (strain DSM 15242 / JCM 11007 / NBRC 100824 / MB4) (Thermoanaerobacter tengcongensis), this protein is Cytidylate kinase.